The primary structure comprises 523 residues: Cytokinin dehydrogenase 3 (523 aa).

A signal peptide spans 1–31 (MASYNLRSQVRLIAITIVIIITLSTPITTNT). Positions 66–243 (TKIFPSAVLI…TRARIKLEVA (178 aa)) constitute an FAD-binding PCMH-type domain. FAD contacts are provided by Ala100, Gly102, and Gly104. A Pros-8alpha-FAD histidine modification is found at His105. Ser106 and Gln110 together coordinate FAD. A glycan (N-linked (GlcNAc...) asparagine) is linked at Asn153. Positions 167, 172, 178, 182, and 233 each coordinate FAD. Residue Asn408 is glycosylated (N-linked (GlcNAc...) asparagine). The FAD site is built by Tyr476, Ser511, and Gln514.

This sequence belongs to the oxygen-dependent FAD-linked oxidoreductase family. The cofactor is FAD. In terms of tissue distribution, very weak expression in the young shoot tissues around two weeks after germination. Present in the center of the floral meristem and the boundary between long stamen primordia and gynoecial primordia.

It localises to the endoplasmic reticulum. Its subcellular location is the vacuole. It carries out the reaction N(6)-dimethylallyladenine + A + H2O = 3-methyl-2-butenal + adenine + AH2. Catalyzes the oxidation of cytokinins, a family of N(6)-substituted adenine derivatives that are plant hormones, where the substituent is an isopentenyl group. Catalyzes in vitro the oxidation of various types of cytokinin nucleotides that are known as direct products of cytokinin biosynthesis. In association with CKX5 regulates the activity of the reproductive meristems, flower organ size and ovule formation. This Arabidopsis thaliana (Mouse-ear cress) protein is Cytokinin dehydrogenase 3 (CKX3).